Here is a 428-residue protein sequence, read N- to C-terminus: Enolase (428 aa).

Q163 contributes to the (2R)-2-phosphoglycerate binding site. The active-site Proton donor is E205. Mg(2+) contacts are provided by D242, E285, and D312. (2R)-2-phosphoglycerate contacts are provided by K337, R366, S367, and K388. The active-site Proton acceptor is K337.

It belongs to the enolase family. It depends on Mg(2+) as a cofactor.

The protein localises to the cytoplasm. Its subcellular location is the secreted. It is found in the cell surface. The catalysed reaction is (2R)-2-phosphoglycerate = phosphoenolpyruvate + H2O. It functions in the pathway carbohydrate degradation; glycolysis; pyruvate from D-glyceraldehyde 3-phosphate: step 4/5. Its function is as follows. Catalyzes the reversible conversion of 2-phosphoglycerate (2-PG) into phosphoenolpyruvate (PEP). It is essential for the degradation of carbohydrates via glycolysis. The protein is Enolase of Novosphingobium aromaticivorans (strain ATCC 700278 / DSM 12444 / CCUG 56034 / CIP 105152 / NBRC 16084 / F199).